A 229-amino-acid polypeptide reads, in one-letter code: Uridylate kinase (229 aa).

Residue 11-12 (GS) participates in ATP binding. Gly-45 is a UMP binding site. Positions 46 and 50 each coordinate ATP. UMP-binding positions include Asp-67 and 114–120 (TEPGHTT). 3 residues coordinate ATP: Thr-140, Tyr-146, and Asp-149.

Belongs to the UMP kinase family. As to quaternary structure, homohexamer.

The protein resides in the cytoplasm. The enzyme catalyses UMP + ATP = UDP + ADP. It functions in the pathway pyrimidine metabolism; CTP biosynthesis via de novo pathway; UDP from UMP (UMPK route): step 1/1. With respect to regulation, inhibited by UTP. In terms of biological role, catalyzes the reversible phosphorylation of UMP to UDP. In Thermoplasma acidophilum (strain ATCC 25905 / DSM 1728 / JCM 9062 / NBRC 15155 / AMRC-C165), this protein is Uridylate kinase.